The primary structure comprises 606 residues: Ribonucleoprotein PTB-binding 1 (606 aa).

Positions 1–41 are disordered; that stretch reads MAADVSVTHRPPLSPKSGAEVEAGDAAERRAPEEELPPLDP. N-acetylalanine is present on A2. S6 and S14 each carry phosphoserine. Positions 45-60 match the Nuclear localization signal motif; it reads RKRLEHTERQFRNRRK. 3 RRM domains span residues 59–130, 132–210, and 221–299; these read RKIL…LQPT, ALLC…WTDA, and RCLC…FCAP. The interaction with PTBP1 stretch occupies residues 307–395; sequence LAALIAAQAT…QTQGQKKPGI (89 aa). The segment at 391-474 is disordered; that stretch reads KKPGILGDSP…PPAPVGLRGS (84 aa). Over residues 453–462 the composition is skewed to low complexity; it reads LGLGPPAAQL. Residue T463 is modified to Phosphothreonine. Residue S474 is modified to Phosphoserine. P488 carries the post-translational modification Phosphothreonine. A disordered region spans residues 519-564; the sequence is GLLGLSPGPNGHSHLLKVRAGGGDMQGWEAPAPQRPLTRPALPSVS. A phosphoserine mark is found at S562 and H567. Residues 579–606 form a disordered region; sequence CPRPSPAQKAAMWASTPRASAATTRTPT. A compositionally biased stretch (low complexity) spans 592–606; it reads ASTPRASAATTRTPT.

Interacts with PTBP1, RAVER2, VCL and ACTN1. Part of a complex containing RAVER1, VCL and ACTN1.

The protein resides in the nucleus. The protein localises to the cytoplasm. In terms of biological role, cooperates with PTBP1 to modulate regulated alternative splicing events. Promotes exon skipping. Cooperates with PTBP1 to modulate switching between mutually exclusive exons during maturation of the TPM1 pre-mRNA. This Homo sapiens (Human) protein is Ribonucleoprotein PTB-binding 1 (RAVER1).